We begin with the raw amino-acid sequence, 476 residues long: Bifunctional protein HldE (476 aa).

The segment at 1–320 (MQNPHIPSFA…RAVHQEGGSG (320 aa)) is ribokinase. 196–199 (NLSE) contributes to the ATP binding site. Residue D265 is part of the active site. The cytidylyltransferase stretch occupies residues 345 to 476 (FTNGCFDIIH…KIVERIREKD (132 aa)).

In the N-terminal section; belongs to the carbohydrate kinase PfkB family. The protein in the C-terminal section; belongs to the cytidylyltransferase family. In terms of assembly, homodimer.

The catalysed reaction is D-glycero-beta-D-manno-heptose 7-phosphate + ATP = D-glycero-beta-D-manno-heptose 1,7-bisphosphate + ADP + H(+). It carries out the reaction D-glycero-beta-D-manno-heptose 1-phosphate + ATP + H(+) = ADP-D-glycero-beta-D-manno-heptose + diphosphate. The protein operates within nucleotide-sugar biosynthesis; ADP-L-glycero-beta-D-manno-heptose biosynthesis; ADP-L-glycero-beta-D-manno-heptose from D-glycero-beta-D-manno-heptose 7-phosphate: step 1/4. Its pathway is nucleotide-sugar biosynthesis; ADP-L-glycero-beta-D-manno-heptose biosynthesis; ADP-L-glycero-beta-D-manno-heptose from D-glycero-beta-D-manno-heptose 7-phosphate: step 3/4. Catalyzes the phosphorylation of D-glycero-D-manno-heptose 7-phosphate at the C-1 position to selectively form D-glycero-beta-D-manno-heptose-1,7-bisphosphate. Its function is as follows. Catalyzes the ADP transfer from ATP to D-glycero-beta-D-manno-heptose 1-phosphate, yielding ADP-D-glycero-beta-D-manno-heptose. The polypeptide is Bifunctional protein HldE (Alcanivorax borkumensis (strain ATCC 700651 / DSM 11573 / NCIMB 13689 / SK2)).